The sequence spans 481 residues: ATP synthase subunit beta (481 aa).

167–174 (GGAGVGKT) contributes to the ATP binding site.

It belongs to the ATPase alpha/beta chains family. F-type ATPases have 2 components, CF(1) - the catalytic core - and CF(0) - the membrane proton channel. CF(1) has five subunits: alpha(3), beta(3), gamma(1), delta(1), epsilon(1). CF(0) has three main subunits: a(1), b(2) and c(9-12). The alpha and beta chains form an alternating ring which encloses part of the gamma chain. CF(1) is attached to CF(0) by a central stalk formed by the gamma and epsilon chains, while a peripheral stalk is formed by the delta and b chains.

It is found in the cell membrane. It carries out the reaction ATP + H2O + 4 H(+)(in) = ADP + phosphate + 5 H(+)(out). Produces ATP from ADP in the presence of a proton gradient across the membrane. The catalytic sites are hosted primarily by the beta subunits. The chain is ATP synthase subunit beta from Corynebacterium efficiens (strain DSM 44549 / YS-314 / AJ 12310 / JCM 11189 / NBRC 100395).